Here is a 70-residue protein sequence, read N- to C-terminus: Putative membrane protein insertion efficiency factor (70 aa).

Belongs to the UPF0161 family.

It localises to the cell membrane. Its function is as follows. Could be involved in insertion of integral membrane proteins into the membrane. This Symbiobacterium thermophilum (strain DSM 24528 / JCM 14929 / IAM 14863 / T) protein is Putative membrane protein insertion efficiency factor.